We begin with the raw amino-acid sequence, 911 residues long: Transferrin-binding protein A (911 aa).

The N-terminal stretch at 1–24 (MQQQHLFRLNILCLSLMTALPAYA) is a signal peptide. The TonB box signature appears at 38–45 (DTIQVKAK). The region spanning 51–176 (RDNEVTGLGK…LAGSVAFQTK (126 aa)) is the TBDR plug domain. Residues 187 to 911 (QWGIQSKTAY…NYTFSLEMKF (725 aa)) form the TBDR beta-barrel domain. The TonB C-terminal box signature appears at 894-911 (NRYAAPGRNYTFSLEMKF).

This sequence belongs to the TonB-dependent receptor family. As to quaternary structure, binds both human apo- and holo-transferrin (TF), via the TF C-terminus. Forms a large complex with TF and TbpB.

The protein resides in the cell outer membrane. In terms of biological role, neisseria acquires iron by extracting it from serum transferrin (TF) in its human host. Acts as a TF receptor and is required for TF utilization. Binds both apo- and holo-TF, via the TF C-terminus. The protein is Transferrin-binding protein A of Neisseria meningitidis serogroup B.